Reading from the N-terminus, the 192-residue chain is Intraflagellar transport protein 22 (192 aa).

GTP is bound by residues 12–19 (GPQRTGKT) and 62–69 (WDVSGSVQ).

The protein belongs to the small GTPase superfamily. Rab family. As to quaternary structure, component of the IFT complex B, composed of IFT88, IFT70, IFT52, IFT46, IFT27, IFT25 and IFT22.

It is found in the cell projection. The protein localises to the cilium. The protein resides in the flagellum. Component of the intraflagellar transport (IFT) complex B. Functions in regulating the cellular pool size of both complex A and complex B and thus plays a critical role in determining the cellular availability of IFT particles. The polypeptide is Intraflagellar transport protein 22 (FAP9) (Chlamydomonas reinhardtii (Chlamydomonas smithii)).